Reading from the N-terminus, the 362-residue chain is Probable protein phosphatase 2C 11 (362 aa).

The PPM-type phosphatase domain maps to 23-329 (KLGLSSMQGW…DNMTMVLVQF (307 aa)). Mn(2+)-binding residues include Asp57, Gly58, Asp272, and Asp320.

The protein belongs to the PP2C family. Mg(2+) is required as a cofactor. The cofactor is Mn(2+).

It catalyses the reaction O-phospho-L-seryl-[protein] + H2O = L-seryl-[protein] + phosphate. It carries out the reaction O-phospho-L-threonyl-[protein] + H2O = L-threonyl-[protein] + phosphate. The chain is Probable protein phosphatase 2C 11 from Oryza sativa subsp. japonica (Rice).